A 333-amino-acid polypeptide reads, in one-letter code: Glyceraldehyde-3-phosphate dehydrogenase (333 aa).

NAD(+) is bound by residues Arg-11 to Ile-12, Asp-32, and Arg-77. D-glyceraldehyde 3-phosphate contacts are provided by residues Ser-148–Thr-150, Thr-179, Thr-208–Gly-209, and Arg-231. Cys-149 serves as the catalytic Nucleophile. Asn-313 is an NAD(+) binding site.

Belongs to the glyceraldehyde-3-phosphate dehydrogenase family. As to quaternary structure, homotetramer.

It is found in the cytoplasm. It carries out the reaction D-glyceraldehyde 3-phosphate + phosphate + NAD(+) = (2R)-3-phospho-glyceroyl phosphate + NADH + H(+). Its pathway is carbohydrate degradation; glycolysis; pyruvate from D-glyceraldehyde 3-phosphate: step 1/5. This is Glyceraldehyde-3-phosphate dehydrogenase (Gapdh) from Glossina morsitans morsitans (Savannah tsetse fly).